A 791-amino-acid polypeptide reads, in one-letter code: Valine--tRNA ligase (791 aa).

A 'HIGH' region motif is present at residues 40-50; sequence PTVSGKMHMGH. The 'KMSKS' region signature appears at 521–525; that stretch reads KMSKS. Lys524 serves as a coordination point for ATP.

The protein belongs to the class-I aminoacyl-tRNA synthetase family. ValS type 2 subfamily.

Its subcellular location is the cytoplasm. It carries out the reaction tRNA(Val) + L-valine + ATP = L-valyl-tRNA(Val) + AMP + diphosphate. Catalyzes the attachment of valine to tRNA(Val). As ValRS can inadvertently accommodate and process structurally similar amino acids such as threonine, to avoid such errors, it has a 'posttransfer' editing activity that hydrolyzes mischarged Thr-tRNA(Val) in a tRNA-dependent manner. The sequence is that of Valine--tRNA ligase from Thermoplasma acidophilum (strain ATCC 25905 / DSM 1728 / JCM 9062 / NBRC 15155 / AMRC-C165).